The following is a 99-amino-acid chain: Photosystem II reaction center Psb28 protein (99 aa).

It belongs to the Psb28 family. Part of the photosystem II complex.

The protein localises to the cell inner membrane. The chain is Photosystem II reaction center Psb28 protein from Gloeobacter violaceus (strain ATCC 29082 / PCC 7421).